The sequence spans 209 residues: Molybdenum cofactor guanylyltransferase (209 aa).

GTP is bound by residues 16-18, K28, N56, D69, and D103; that span reads LAG. Mg(2+) is bound at residue D103.

It belongs to the MobA family. Monomer. Mg(2+) is required as a cofactor.

The protein resides in the cytoplasm. It catalyses the reaction Mo-molybdopterin + GTP + H(+) = Mo-molybdopterin guanine dinucleotide + diphosphate. Transfers a GMP moiety from GTP to Mo-molybdopterin (Mo-MPT) cofactor (Moco or molybdenum cofactor) to form Mo-molybdopterin guanine dinucleotide (Mo-MGD) cofactor. In Rhizobium leguminosarum bv. trifolii (strain WSM2304), this protein is Molybdenum cofactor guanylyltransferase.